The following is a 327-amino-acid chain: Malate dehydrogenase (327 aa).

Position 11-17 (11-17 (GAAGNIS)) interacts with NAD(+). Substrate is bound by residues arginine 92 and arginine 98. NAD(+) contacts are provided by residues asparagine 105, glutamine 112, and 129–131 (VGN). Residues asparagine 131 and arginine 162 each coordinate substrate. Residue histidine 187 is the Proton acceptor of the active site. Residues 304-327 (SQEKMKATEQELSEERDAVEHLLP) form a disordered region.

Belongs to the LDH/MDH superfamily. MDH type 2 family.

The enzyme catalyses (S)-malate + NAD(+) = oxaloacetate + NADH + H(+). Functionally, catalyzes the reversible oxidation of malate to oxaloacetate. The chain is Malate dehydrogenase from Psychrobacter sp. (strain PRwf-1).